We begin with the raw amino-acid sequence, 712 residues long: Ferric reductase transmembrane component 6 (712 aa).

The signal sequence occupies residues 1–17; it reads MHRTLLFLTWLISLTKA. Residues 18 to 167 lie on the Vacuolar side of the membrane; sequence FNIKLPHTEK…HAHAYNLDIS (150 aa). 3 N-linked (GlcNAc...) asparagine glycosylation sites follow: Asn89, Asn112, and Asn124. Residues 168 to 188 form a helical membrane-spanning segment; that stretch reads SVYGAYLTYYFVIVGIIAVFF. Residues 189–244 are Cytoplasmic-facing; that stretch reads HMSHYNGLNRALFASRFVNYIRGHFVLPTFLVDKHANHFKFLNVEVFTGLMPNSLE. The helical transmembrane segment at 245–265 threads the bilayer; it reads AWIIFGYTLANIIFLSISYII. Over 266-287 the chain is Vacuolar; the sequence is DPYNLIFNSHLSQFTRLLADRS. Residues 287-411 enclose the Ferric oxidoreductase domain; it reads SGILAFTQFP…YCCWQHVKIF (125 aa). A helical membrane pass occupies residues 288-308; the sequence is GILAFTQFPLIIIFTARNSFL. Residues 309-328 are Cytoplasmic-facing; that stretch reads EFLTGVKFNSFISFHKWIGR. His323 and His337 together coordinate heme. The helical transmembrane segment at 329-349 threads the bilayer; the sequence is IMVLNATIHSLSYSLFAIINH. The Vacuolar segment spans residues 350–360; that stretch reads AFKISNKQLYW. A helical membrane pass occupies residues 361-381; it reads KFGIASITVLCVLLVLSLGIV. At 382–387 the chain is on the cytoplasmic side; it reads RKRHYE. The helical transmembrane segment at 388-408 threads the bilayer; it reads FFLYTHIILALLFFYCCWQHV. 2 residues coordinate heme: His393 and His407. Residues 409 to 416 are Vacuolar-facing; it reads KIFNGWKE. The FAD-binding FR-type domain occupies 412–546; sequence NGWKEWIVVS…EGPYGPSNLH (135 aa). A helical transmembrane segment spans residues 417–437; it reads WIVVSLLIWGLEKLFRIWNIL. The Cytoplasmic portion of the chain corresponds to 438 to 712; it reads QFRFPKATLI…IEYFEEYQCW (275 aa). FAD is bound at residue 493–499; the sequence is HPFTIID. NADP(+)-binding positions include 538–541 and 678–679; these read GPYG and CG.

It belongs to the ferric reductase (FRE) family. Requires FAD as cofactor.

It localises to the vacuole membrane. It catalyses the reaction 2 a Fe(II)-siderophore + NADP(+) + H(+) = 2 a Fe(III)-siderophore + NADPH. Metalloreductase responsible for reducing vacuolar iron and copper prior to transport into the cytosol. Catalyzes the reduction of Fe(3+) to Fe(2+) and Cu(2+) to Cu(+), respectively, which can then be transported by the respective vacuolar efflux systems to the cytosol. This Saccharomyces cerevisiae (strain ATCC 204508 / S288c) (Baker's yeast) protein is Ferric reductase transmembrane component 6 (FRE6).